We begin with the raw amino-acid sequence, 383 residues long: L-lactate dehydrogenase (383 aa).

In terms of domain architecture, FMN hydroxy acid dehydrogenase spans 1–380; that stretch reads MIIASTFDYR…TCESLVNTDA (380 aa). Tyrosine 24 serves as a coordination point for substrate. Positions 106 and 127 each coordinate FMN. Residue tyrosine 129 coordinates substrate. Residue threonine 155 coordinates FMN. Arginine 164 lines the substrate pocket. Residue lysine 251 coordinates FMN. Histidine 275 acts as the Proton acceptor in catalysis. Arginine 278 serves as a coordination point for substrate. Position 306 to 330 (306 to 330) interacts with FMN; the sequence is DSGVRSGLDVVRMIAQGADAVMIGR.

This sequence belongs to the FMN-dependent alpha-hydroxy acid dehydrogenase family. FMN serves as cofactor.

It localises to the cell inner membrane. It carries out the reaction (S)-lactate + A = pyruvate + AH2. Its function is as follows. Catalyzes the conversion of L-lactate to pyruvate. Is coupled to the respiratory chain. This is L-lactate dehydrogenase from Bartonella tribocorum (strain CIP 105476 / IBS 506).